The sequence spans 325 residues: Methionine import ATP-binding protein MetN 3 (325 aa).

The 238-residue stretch at 2–239 folds into the ABC transporter domain; the sequence is IEVQQLCKVY…PQSALGRALL (238 aa). 36 to 43 is an ATP binding site; the sequence is GRSGAGKS.

This sequence belongs to the ABC transporter superfamily. Methionine importer (TC 3.A.1.24) family. The complex is composed of two ATP-binding proteins (MetN), two transmembrane proteins (MetI) and a solute-binding protein (MetQ).

The protein localises to the cell inner membrane. The enzyme catalyses L-methionine(out) + ATP + H2O = L-methionine(in) + ADP + phosphate + H(+). The catalysed reaction is D-methionine(out) + ATP + H2O = D-methionine(in) + ADP + phosphate + H(+). Functionally, part of the ABC transporter complex MetNIQ involved in methionine import. Responsible for energy coupling to the transport system. This chain is Methionine import ATP-binding protein MetN 3, found in Pseudomonas fluorescens (strain ATCC BAA-477 / NRRL B-23932 / Pf-5).